The primary structure comprises 30 residues: uncharacterized protein (30 aa).

This is an uncharacterized protein from Bacillus subtilis (strain 168).